Here is a 219-residue protein sequence, read N- to C-terminus: MKITWHGHAFIEIQVAGKQILIDPFITGNPFTKTKPEDLNPDYILLTHSHRDHVGDTEELAKKSGATIVTEMDMVNDYAQKGFKVEGPNYGGTVHFDWGDVKIIPAWHTTANVPLGMATGLALTIEGKLIYIAGDTGLFSDMKLVGRKQQIDLAFLPIGDYYTMGPDDAAYAASLIEAKKVIPDHFNTFPPIKQDVNDFWKDVPENMKFTAEIDKPFEL.

Belongs to the UPF0173 family.

This is UPF0173 metal-dependent hydrolase LSL_0324 from Ligilactobacillus salivarius (strain UCC118) (Lactobacillus salivarius).